The following is a 1842-amino-acid chain: Fatty acid synthase alpha subunit pigJ (1842 aa).

The disordered stretch occupies residues glycine 120–aspartate 184. Low complexity predominate over residues serine 140–threonine 175. Residues aspartate 184–lysine 262 form the Carrier domain. Serine 222 is subject to O-(pantetheine 4'-phosphoryl)serine. Positions glycine 611–glycine 807 are beta-ketoacyl reductase. The Ketosynthase family 3 (KS3) domain occupies lysine 1058–alanine 1585. Active-site for beta-ketoacyl synthase activity residues include cysteine 1244, histidine 1470, and histidine 1511. Residues lysine 1649 to threonine 1672 are disordered. Residues asparagine 1658 to serine 1668 show a composition bias toward low complexity. Residues aspartate 1725, valine 1726, and glutamate 1727 each contribute to the Mg(2+) site. Residues aspartate 1725 to glutamate 1727, serine 1761, glutamate 1770 to serine 1780, and isoleucine 1823 to histidine 1825 contribute to the acetyl-CoA site. Threonine 1824 and histidine 1825 together coordinate Mg(2+).

This sequence belongs to the thiolase-like superfamily. Fungal fatty acid synthetase subunit alpha family. In terms of assembly, [Alpha(6)beta(6)] hexamers of two multifunctional subunits (alpha and beta).

The enzyme catalyses acetyl-CoA + n malonyl-CoA + 2n NADPH + 4n H(+) = a long-chain-acyl-CoA + n CoA + n CO2 + 2n NADP(+).. It carries out the reaction a fatty acyl-[ACP] + malonyl-[ACP] + H(+) = a 3-oxoacyl-[ACP] + holo-[ACP] + CO2. It catalyses the reaction a (3R)-hydroxyacyl-[ACP] + NADP(+) = a 3-oxoacyl-[ACP] + NADPH + H(+). It functions in the pathway secondary metabolite biosynthesis. In terms of biological role, fatty acid synthase alpha subunit; part of the gene cluster that mediates the biosynthesis of azaphilone pigments (MonAzPs), a complex mixture of compounds with a common azaphilone skeleton very widely used as food colorants. PigJ and pigK form the two subunits of a dedicated fungal fatty acid synthase (FAS) that produces the side chain fatty acyl moiety of MonAzPs, a beta-keto fatty acid. The chain length control of the pigJ-pigK FAS is somewhat flexible as MonAzPs features either a beta-ketooctanoic or a beta-ketodecanoic acid moiety. The beta-ketoacyl-ACP probably serves as the substrate for the acetyltransferase pigD that directly transfers the fatty acyl chain to the C-4 alcohol of the pyran ring. The first step of the pathway is performed by the nrPKS pigA that forms the hexaketide precursor from successive condensations of five malonyl-CoA units, with a simple acetyl-CoA starter unit. The role of esterase pigG is not clear, but it may play at most a supplementary role in the formation of the benzaldehyde produced by the pigA nrPKS. This very reactive benzaldehyde is intercepted by the pigC ketoreductase that to provide the first stable enzyme-free MonAzPs intermediate, 6-(4-hydroxy-2-oxopentyl)-3-methyl-2,4-dioxocyclohexane carbaldehyde, also known as M7PKS-1. The FAD-dependent monooxygenase pigN hydroxylates M7PKS-1 at C-4, which triggers the formation of the pyran ring. PigJ, pigK and pigD are involved in the acetylation of the pyran ring. PigJ and pigK form the two subunits of a dedicated fungal FAS that produces the side chain fatty acyl moiety of MonAzPs and pigD transfers the fatty acyl chain to the C-4 alcohol. PigM and pigO are involved in the elimination of the omega-1 alcohol. PigM acts as an O-acetyltransferase that synthesizes the putative O-11 acetyl intermediate whereas pigO eliminates acetic acid to yield an intermediate with a C10(11) double bond. The dehydration of the C-11 alcohol followed by the reduction of the C6(7) double bond by the NAD(P)H-dependent oxidoreductase pigE increases the electrophilicity of the C-5 ketone of the resulting acyl benzopyran. This in turn sets up the C-5 ketone for an intramolecular Knoevenagel aldol condensation with the C-20 enol of the side chain. This condensation affords the characteristic linear tricyclic carbon skeletons of the yellow pigments that serve as the common precursors for the classical yellow pigments monascin and ankaflavin, orange pigments rubopunctatin and monascorubrin, and red pigments ribropunctamine and monascorubramine. The FAD-dependent oxidoreductase pigF is especially invoved in the biosynthesis of orange and red pigments via desaturation of C6(7). This Monascus ruber (Mold) protein is Fatty acid synthase alpha subunit pigJ.